A 152-amino-acid chain; its full sequence is Deoxyuridine 5'-triphosphate nucleotidohydrolase (152 aa).

Residues 71 to 73 (RSG), N84, 88 to 90 (LID), and M98 each bind substrate.

This sequence belongs to the dUTPase family. The cofactor is Mg(2+).

It carries out the reaction dUTP + H2O = dUMP + diphosphate + H(+). The protein operates within pyrimidine metabolism; dUMP biosynthesis; dUMP from dCTP (dUTP route): step 2/2. Its function is as follows. This enzyme is involved in nucleotide metabolism: it produces dUMP, the immediate precursor of thymidine nucleotides and it decreases the intracellular concentration of dUTP so that uracil cannot be incorporated into DNA. This is Deoxyuridine 5'-triphosphate nucleotidohydrolase from Shewanella putrefaciens (strain CN-32 / ATCC BAA-453).